The chain runs to 574 residues: Septation ring formation regulator EzrA (574 aa).

Topologically, residues 1–7 (MSSGIIL) are extracellular. Residues 8–26 (LIVAIVLLVIIAYLVGVII) traverse the membrane as a helical segment. The Cytoplasmic portion of the chain corresponds to 27–574 (RKRNDSLITS…YEKTREHIRF (548 aa)). 3 coiled-coil regions span residues 102-141 (NFIRAKHEINSVESQLNLVEEDIASIREALNILKEQEEKN), 274-350 (ELVT…ETES), and 459-520 (QLEA…SFEA).

It belongs to the EzrA family.

It localises to the cell membrane. Negative regulator of FtsZ ring formation; modulates the frequency and position of FtsZ ring formation. Inhibits FtsZ ring formation at polar sites. Interacts either with FtsZ or with one of its binding partners to promote depolymerization. The protein is Septation ring formation regulator EzrA of Streptococcus pyogenes serotype M4 (strain MGAS10750).